Here is a 505-residue protein sequence, read N- to C-terminus: 4-alpha-glucanotransferase (505 aa).

Belongs to the disproportionating enzyme family.

It is found in the cytoplasm. The enzyme catalyses Transfers a segment of a (1-&gt;4)-alpha-D-glucan to a new position in an acceptor, which may be glucose or a (1-&gt;4)-alpha-D-glucan.. This is 4-alpha-glucanotransferase (malQ) from Streptococcus pneumoniae serotype 4 (strain ATCC BAA-334 / TIGR4).